The primary structure comprises 306 residues: Uricase (306 aa).

Residues Lys-5 and Thr-65 each act as charge relay system in the active site. Urate is bound by residues Thr-65, Asp-66, Phe-175, Arg-192, Ile-240, Gln-241, and Asn-267. The segment at 281–306 (AKVLREPPRPTGYQQFSMDRSDLEEQ) is disordered.

The protein belongs to the uricase family.

The catalysed reaction is urate + O2 + H2O = 5-hydroxyisourate + H2O2. It participates in purine metabolism; urate degradation; (S)-allantoin from urate: step 1/3. Catalyzes the oxidation of uric acid to 5-hydroxyisourate, which is further processed to form (S)-allantoin. In Halalkalicoccus jeotgali (strain DSM 18796 / CECT 7217 / JCM 14584 / KCTC 4019 / B3), this protein is Uricase.